A 156-amino-acid chain; its full sequence is Protein OXIDATIVE STRESS 3 LIKE 3 (156 aa).

The interval 1–67 (MHYQEQMESL…GLSKHYKGKS (67 aa)) is disordered. Residues 13-26 (GEERRRGNYTRDVD) are compositionally biased toward basic and acidic residues.

The protein resides in the nucleus. Its function is as follows. Promotes slightly the tolerance to oxidizing chemicals (e.g. diamide). The polypeptide is Protein OXIDATIVE STRESS 3 LIKE 3 (Arabidopsis thaliana (Mouse-ear cress)).